Reading from the N-terminus, the 250-residue chain is 4-hydroxy-tetrahydrodipicolinate reductase (250 aa).

NAD(+)-binding positions include 10–15 (GVKGRI), 78–80 (GTT), and 105–108 (APNF). H135 (proton donor/acceptor) is an active-site residue. H136 lines the (S)-2,3,4,5-tetrahydrodipicolinate pocket. The active-site Proton donor is K139. A (S)-2,3,4,5-tetrahydrodipicolinate-binding site is contributed by 145–146 (GT).

Belongs to the DapB family.

The protein resides in the cytoplasm. The enzyme catalyses (S)-2,3,4,5-tetrahydrodipicolinate + NAD(+) + H2O = (2S,4S)-4-hydroxy-2,3,4,5-tetrahydrodipicolinate + NADH + H(+). It catalyses the reaction (S)-2,3,4,5-tetrahydrodipicolinate + NADP(+) + H2O = (2S,4S)-4-hydroxy-2,3,4,5-tetrahydrodipicolinate + NADPH + H(+). It functions in the pathway amino-acid biosynthesis; L-lysine biosynthesis via DAP pathway; (S)-tetrahydrodipicolinate from L-aspartate: step 4/4. In terms of biological role, catalyzes the conversion of 4-hydroxy-tetrahydrodipicolinate (HTPA) to tetrahydrodipicolinate. The polypeptide is 4-hydroxy-tetrahydrodipicolinate reductase (Streptomyces avermitilis (strain ATCC 31267 / DSM 46492 / JCM 5070 / NBRC 14893 / NCIMB 12804 / NRRL 8165 / MA-4680)).